The primary structure comprises 530 residues: Synembryn-like chaperone C3E7.04c (530 aa).

Residues 492-512 (SFIYHCYHSFVGPIHILLLMF) traverse the membrane as a helical segment.

It belongs to the synembryn family.

The protein resides in the membrane. Chaperone that specifically binds and folds some, but not all, nascent G alpha proteins prior to G protein heterotrimer formation, promoting their stability and activity. Also acts as a guanine nucleotide exchange factor (GEF) for G alpha proteins by stimulating exchange of bound GDP for free GTP. This chain is Synembryn-like chaperone C3E7.04c, found in Schizosaccharomyces pombe (strain 972 / ATCC 24843) (Fission yeast).